Reading from the N-terminus, the 248-residue chain is Large ribosomal subunit protein uL30 (248 aa).

M1 carries the N-acetylmethionine modification. Tandem repeats lie at residues 7–18 (KKKEVPAVPETL), 19–30 (KKKRRNFAELKI), 31–42 (KRLRKKFAQKML), and 43–54 (RKARRKLIYEKA). The segment at 7–54 (KKKEVPAVPETLKKKRRNFAELKIKRLRKKFAQKMLRKARRKLIYEKA) is 4 X 12 AA tandem repeats. Phosphothreonine is present on T17. The residue at position 124 (K124) is an N6-acetyllysine. At K127 the chain carries N6-succinyllysine. Y139 carries the phosphotyrosine modification.

The protein belongs to the universal ribosomal protein uL30 family. As to quaternary structure, component of the large ribosomal subunit. Homodimer. Interacts with DHX33.

The protein resides in the cytoplasm. Its function is as follows. Component of the large ribosomal subunit. The ribosome is a large ribonucleoprotein complex responsible for the synthesis of proteins in the cell. Binds to G-rich structures in 28S rRNA and in mRNAs. Plays a regulatory role in the translation apparatus; inhibits cell-free translation of mRNAs. The polypeptide is Large ribosomal subunit protein uL30 (RPL7) (Homo sapiens (Human)).